The chain runs to 402 residues: Tol-Pal system protein TolB (402 aa).

Positions 1-17 are cleaved as a signal peptide; that stretch reads MKKIVAIFLVFLGSLWA.

This sequence belongs to the TolB family. The Tol-Pal system is composed of five core proteins: the inner membrane proteins TolA, TolQ and TolR, the periplasmic protein TolB and the outer membrane protein Pal. They form a network linking the inner and outer membranes and the peptidoglycan layer.

Its subcellular location is the periplasm. Its function is as follows. Part of the Tol-Pal system, which plays a role in outer membrane invagination during cell division and is important for maintaining outer membrane integrity. The sequence is that of Tol-Pal system protein TolB from Campylobacter jejuni (strain RM1221).